We begin with the raw amino-acid sequence, 164 residues long: Phosphopantetheine adenylyltransferase (164 aa).

Residue Thr-10 participates in substrate binding. ATP-binding positions include 10–11 (TF) and His-18. Substrate-binding residues include Lys-42, Thr-79, and Arg-93. ATP is bound by residues 94–96 (GLR), Glu-104, and 129–135 (NQIISSR).

Belongs to the bacterial CoaD family. In terms of assembly, homohexamer. Requires Mg(2+) as cofactor.

Its subcellular location is the cytoplasm. The enzyme catalyses (R)-4'-phosphopantetheine + ATP + H(+) = 3'-dephospho-CoA + diphosphate. It participates in cofactor biosynthesis; coenzyme A biosynthesis; CoA from (R)-pantothenate: step 4/5. Functionally, reversibly transfers an adenylyl group from ATP to 4'-phosphopantetheine, yielding dephospho-CoA (dPCoA) and pyrophosphate. The chain is Phosphopantetheine adenylyltransferase from Pelagibacter ubique (strain HTCC1062).